We begin with the raw amino-acid sequence, 509 residues long: Maturase K (509 aa).

Belongs to the intron maturase 2 family. MatK subfamily.

It localises to the plastid. The protein resides in the chloroplast. Functionally, usually encoded in the trnK tRNA gene intron. Probably assists in splicing its own and other chloroplast group II introns. The sequence is that of Maturase K from Solanum bulbocastanum (Wild potato).